A 311-amino-acid polypeptide reads, in one-letter code: Putative dihydroorotate dehydrogenase A (fumarate) (311 aa).

Residues lysine 45, 69 to 73, and asparagine 128 each bind substrate; that span reads NSMGL. Position 45–46 (45–46) interacts with FMN; sequence KT. Residue asparagine 128 participates in FMN binding. The active-site Nucleophile is the cysteine 131. FMN-binding residues include lysine 165 and valine 193. Residue 194 to 195 participates in substrate binding; the sequence is NS. FMN is bound by residues glycine 220, 248 to 249, and 270 to 271; these read GG and GT.

It belongs to the dihydroorotate dehydrogenase family. Type 1 subfamily. As to quaternary structure, homodimer. It depends on FMN as a cofactor.

It is found in the cytoplasm. The catalysed reaction is (S)-dihydroorotate + fumarate = orotate + succinate. It participates in pyrimidine metabolism; UMP biosynthesis via de novo pathway. Catalyzes the conversion of dihydroorotate to orotate with fumarate as the electron acceptor. The protein is Putative dihydroorotate dehydrogenase A (fumarate) (pyrD) of Streptococcus pyogenes serotype M5 (strain Manfredo).